A 215-amino-acid chain; its full sequence is Thymidylate kinase (215 aa).

7–14 (GLDGSGKT) lines the ATP pocket.

Belongs to the thymidylate kinase family.

It carries out the reaction dTMP + ATP = dTDP + ADP. Phosphorylation of dTMP to form dTDP in both de novo and salvage pathways of dTTP synthesis. The chain is Thymidylate kinase from Mycoplasmopsis agalactiae (strain NCTC 10123 / CIP 59.7 / PG2) (Mycoplasma agalactiae).